A 74-amino-acid polypeptide reads, in one-letter code: Exodeoxyribonuclease 7 small subunit (74 aa).

It belongs to the XseB family. Heterooligomer composed of large and small subunits.

The protein resides in the cytoplasm. The catalysed reaction is Exonucleolytic cleavage in either 5'- to 3'- or 3'- to 5'-direction to yield nucleoside 5'-phosphates.. In terms of biological role, bidirectionally degrades single-stranded DNA into large acid-insoluble oligonucleotides, which are then degraded further into small acid-soluble oligonucleotides. The polypeptide is Exodeoxyribonuclease 7 small subunit (Thermotoga neapolitana (strain ATCC 49049 / DSM 4359 / NBRC 107923 / NS-E)).